The chain runs to 85 residues: Small ribosomal subunit protein bS18 (85 aa).

The protein belongs to the bacterial ribosomal protein bS18 family. In terms of assembly, part of the 30S ribosomal subunit. Forms a tight heterodimer with protein bS6.

In terms of biological role, binds as a heterodimer with protein bS6 to the central domain of the 16S rRNA, where it helps stabilize the platform of the 30S subunit. In Helicobacter pylori (strain Shi470), this protein is Small ribosomal subunit protein bS18.